The primary structure comprises 443 residues: Chromosomal replication initiator protein DnaA (443 aa).

Positions 1–73 (MYGDHRQIWE…YDAASKATNK (73 aa)) are domain I, interacts with DnaA modulators. The tract at residues 73 to 106 (KLYEIKILSEDEEEYREIKESIEKENLTESTTLS) is domain II. Residues 107-323 (TLNPKYTFDT…GALIRIVAFS (217 aa)) are domain III, AAA+ region. Gly-151, Gly-153, Lys-154, and Thr-155 together coordinate ATP. The tract at residues 324 to 443 (NLTKANIDLE…EELKKRIKGY (120 aa)) is domain IV, binds dsDNA.

It belongs to the DnaA family. Oligomerizes as a right-handed, spiral filament on DNA at oriC.

Its subcellular location is the cytoplasm. Plays an essential role in the initiation and regulation of chromosomal replication. ATP-DnaA binds to the origin of replication (oriC) to initiate formation of the DNA replication initiation complex once per cell cycle. Binds the DnaA box (a 9 base pair repeat at the origin) and separates the double-stranded (ds)DNA. Forms a right-handed helical filament on oriC DNA; dsDNA binds to the exterior of the filament while single-stranded (ss)DNA is stabiized in the filament's interior. The ATP-DnaA-oriC complex binds and stabilizes one strand of the AT-rich DNA unwinding element (DUE), permitting loading of DNA polymerase. After initiation quickly degrades to an ADP-DnaA complex that is not apt for DNA replication. Binds acidic phospholipids. This is Chromosomal replication initiator protein DnaA from Thermoanaerobacter pseudethanolicus (strain ATCC 33223 / 39E) (Clostridium thermohydrosulfuricum).